The sequence spans 143 residues: Large ribosomal subunit protein uL11 (143 aa).

This sequence belongs to the universal ribosomal protein uL11 family. As to quaternary structure, part of the ribosomal stalk of the 50S ribosomal subunit. Interacts with L10 and the large rRNA to form the base of the stalk. L10 forms an elongated spine to which L12 dimers bind in a sequential fashion forming a multimeric L10(L12)X complex. In terms of processing, one or more lysine residues are methylated.

Its function is as follows. Forms part of the ribosomal stalk which helps the ribosome interact with GTP-bound translation factors. The chain is Large ribosomal subunit protein uL11 from Leifsonia xyli subsp. xyli (strain CTCB07).